Consider the following 501-residue polypeptide: Ell-associated factor Eaf (501 aa).

2 stretches are compositionally biased toward polar residues: residues 138–149 and 173–192; these read NMGQGQLHSQGA and ENST…SRRN. Disordered regions lie at residues 138 to 226 and 256 to 501; these read NMGQ…PAWD and GHAN…DDDD. Composition is skewed to low complexity over residues 200-221 and 256-270; these read RNSP…SPQS and GHAN…SATG. Residue Ser202 is modified to Phosphoserine. Residues 271 to 283 show a composition bias toward polar residues; the sequence is QTDFGSISSSSHI. Composition is skewed to low complexity over residues 302–314 and 329–343; these read QRQS…QQQP and QQQR…QRPP. The segment covering 393-408 has biased composition (acidic residues); it reads DSSDSDSGSDSDDSTE. 3 stretches are compositionally biased toward low complexity: residues 416-437, 455-471, and 483-501; these read QQPV…HLNQ, QQQQ…QKQQ, and NDLL…DDDD.

It belongs to the EAF family.

The protein resides in the nucleus. Promotes transcriptional elongation by Su(Tpl)/ELL. Essential for development. This is Ell-associated factor Eaf from Drosophila yakuba (Fruit fly).